The primary structure comprises 157 residues: UPF0178 protein Nwi_2152 (157 aa).

The protein belongs to the UPF0178 family.

This Nitrobacter winogradskyi (strain ATCC 25391 / DSM 10237 / CIP 104748 / NCIMB 11846 / Nb-255) protein is UPF0178 protein Nwi_2152.